The chain runs to 344 residues: Angiopoietin-related protein 7 (344 aa).

The first 26 residues, 1-26 (MLKKTLSAVAWLCIFLVAFVSHPVWP), serve as a signal peptide directing secretion. Residues 37 to 116 (ELTAATCCEE…IGIMQLQAAQ (80 aa)) are a coiled coil. A glycan (N-linked (GlcNAc...) asparagine) is linked at Asn-56. Positions 120 to 341 (QTSADAIYDC…RVEMKIRPED (222 aa)) constitute a Fibrinogen C-terminal domain. Cys-129 and Cys-160 are disulfide-bonded. Residues Asn-251 and Asn-265 are each glycosylated (N-linked (GlcNAc...) asparagine). Residues Cys-283 and Cys-296 are joined by a disulfide bond.

As to quaternary structure, homotetramer; disulfide-linked.

The protein localises to the secreted. Functionally, has a role in the formation and organization of the extracellular matrix. In the eye, it functions as a mediator of dexamethasone-induced matrix deposition in the trabecular meshwork, the tissue responsible for the outflow of the ocular aqueous humor and for the maintenance of intraocular pressure. Is a negative regulator of angiogenesis in the cornea, and plays a major role in maintaining corneal avascularity and transparency. This Bos taurus (Bovine) protein is Angiopoietin-related protein 7 (ANGPTL7).